The sequence spans 122 residues: UPF0102 protein Smed_3545 (122 aa).

It belongs to the UPF0102 family.

The polypeptide is UPF0102 protein Smed_3545 (Sinorhizobium medicae (strain WSM419) (Ensifer medicae)).